Consider the following 243-residue polypeptide: Orotidine 5'-phosphate decarboxylase (243 aa).

Substrate is bound by residues Asp-18, Lys-39, 66-75 (DLKFHDIPAT), Thr-130, Arg-192, Gln-201, Gly-221, and Arg-222. Lys-68 acts as the Proton donor in catalysis.

It belongs to the OMP decarboxylase family. Type 1 subfamily. As to quaternary structure, homodimer.

It catalyses the reaction orotidine 5'-phosphate + H(+) = UMP + CO2. The protein operates within pyrimidine metabolism; UMP biosynthesis via de novo pathway; UMP from orotate: step 2/2. Catalyzes the decarboxylation of orotidine 5'-monophosphate (OMP) to uridine 5'-monophosphate (UMP). This is Orotidine 5'-phosphate decarboxylase from Synechococcus sp. (strain WH7803).